Reading from the N-terminus, the 374-residue chain is tRNA-specific 2-thiouridylase MnmA (374 aa).

Residues 12–19 and Met-38 each bind ATP; that span reads GMSGGVDS. Residues 98-100 form an interaction with target base in tRNA region; sequence NPD. Cys-103 serves as the catalytic Nucleophile. Cys-103 and Cys-200 are oxidised to a cystine. Gly-127 contacts ATP. The interaction with tRNA stretch occupies residues 150–152; sequence KDQ. The active-site Cysteine persulfide intermediate is Cys-200. An interaction with tRNA region spans residues 311-312; sequence RY.

Belongs to the MnmA/TRMU family.

The protein localises to the cytoplasm. The enzyme catalyses S-sulfanyl-L-cysteinyl-[protein] + uridine(34) in tRNA + AH2 + ATP = 2-thiouridine(34) in tRNA + L-cysteinyl-[protein] + A + AMP + diphosphate + H(+). Catalyzes the 2-thiolation of uridine at the wobble position (U34) of tRNA, leading to the formation of s(2)U34. This Enterococcus faecalis (strain ATCC 700802 / V583) protein is tRNA-specific 2-thiouridylase MnmA.